We begin with the raw amino-acid sequence, 382 residues long: Probable cytosolic iron-sulfur protein assembly protein 1 (382 aa).

WD repeat units lie at residues 9 to 48 (AHHD…KFPR), 55 to 107 (THTR…DNDE), 138 to 178 (GHEH…EEFE), 185 to 224 (EHQQ…DDWG), 231 to 278 (GHQG…SETN), 303 to 342 (AHTY…WEIE), and 349 to 382 (HGVH…NVWE).

This sequence belongs to the WD repeat CIA1 family. Interacts with NAR1.

The protein localises to the cytoplasm. It localises to the nucleus. Its function is as follows. Essential component of the cytosolic iron-sulfur (Fe/S) protein assembly machinery. Required for the maturation of extramitochondrial Fe/S proteins. This Meyerozyma guilliermondii (strain ATCC 6260 / CBS 566 / DSM 6381 / JCM 1539 / NBRC 10279 / NRRL Y-324) (Yeast) protein is Probable cytosolic iron-sulfur protein assembly protein 1.